The chain runs to 840 residues: Probable inorganic carbon transporter subunit DabA 2 (840 aa).

Residues C356, D358, H540, and C555 each contribute to the Zn(2+) site.

The protein belongs to the inorganic carbon transporter (TC 9.A.2) DabA family. In terms of assembly, forms a complex with DabB. Requires Zn(2+) as cofactor.

The protein resides in the cell inner membrane. Part of an energy-coupled inorganic carbon pump. The chain is Probable inorganic carbon transporter subunit DabA 2 from Bradyrhizobium sp. (strain ORS 278).